The sequence spans 370 residues: Actin-related protein 2/3 complex subunit 1A-A (370 aa).

6 WD repeats span residues 6–45 (FLLEPISCHAWNKDLTQIAISPNNHEVHIYKKSGDQWVKG), 50–89 (EHNGHITGIDWAPKSDRIVTCGADRNAYVWSQKDGVWKPT), 140–179 (PIRSTVLSLDWHPNNVLLAAGSCDFKTRVFSAYIKEVDEK), 202–241 (SSGGWVHSVSFSASGNKLAWVSHDSTVSVADASKNMSVSQ), 244–284 (TEFL…TFVS), and 322–365 (LHQN…SYIQ).

It belongs to the WD repeat ARPC1 family. In terms of assembly, component of the Arp2/3 complex.

The protein resides in the cytoplasm. Its subcellular location is the cytoskeleton. It is found in the nucleus. Probably functions as a component of the Arp2/3 complex which is involved in regulation of actin polymerization and together with an activating nucleation-promoting factor (NPF) mediates the formation of branched actin networks. In addition to its role in the cytoplasmic cytoskeleton, the Arp2/3 complex also promotes actin polymerization in the nucleus, thereby regulating gene transcription and repair of damaged DNA. In Xenopus laevis (African clawed frog), this protein is Actin-related protein 2/3 complex subunit 1A-A (arpc1a-a).